Consider the following 332-residue polypeptide: MDPIREGEVAHEGDSVYTLNDFTKLEKIGEGTYGVVYKGKNRRTNAMVAMKKIRLESEDEGVPSTAVREISLLKELQHPNVVGLEAVIMQENRLFLIFEFLSFDLKRYMDQLGKDEYLPLETLKSYTFQILQAMCFCHQRRVIHRDLKPQNLLVDNNGAIKLADFGLARAIGIPIRVYTHEVVTLWYRAPEILMGAQRYSMGVDMWSIGCIFAEMATKKPLFQGDSEIDELFRIFRVLGTPTELEWNGVESLPDYKATFPKWRENFLRDKFYDKKTGKHLLDDTAFSLLEGLLIYDPSLRLNAKKALVHPYFDNMDTSKLPAGNYRGELELF.

Residues 22–312 (FTKLEKIGEG…AKKALVHPYF (291 aa)) enclose the Protein kinase domain. ATP contacts are provided by residues 28–36 (IGEGTYGVV) and K51. T32 carries the post-translational modification Phosphothreonine. A Phosphotyrosine modification is found at Y33. Residue D146 is the Proton acceptor of the active site.

Belongs to the protein kinase superfamily. CMGC Ser/Thr protein kinase family. CDC2/CDKX subfamily. As to quaternary structure, forms a stable but non-covalent complex with a regulatory subunit and with a cyclin. Interacts with cks-1. In terms of processing, phosphorylated.

It is found in the nucleus. Its subcellular location is the cytoplasm. The protein resides in the cytoskeleton. It localises to the microtubule organizing center. The protein localises to the centrosome. It is found in the chromosome. It catalyses the reaction L-seryl-[protein] + ATP = O-phospho-L-seryl-[protein] + ADP + H(+). The catalysed reaction is L-threonyl-[protein] + ATP = O-phospho-L-threonyl-[protein] + ADP + H(+). The enzyme catalyses [DNA-directed RNA polymerase] + ATP = phospho-[DNA-directed RNA polymerase] + ADP + H(+). With respect to regulation, phosphorylation both activates and inactivates the enzyme depending on the site of phosphorylation. Functionally, plays a key role in the control of the eukaryotic cell cycle. Required for entry into S-phase and mitosis. Acts as a component of the kinase complex that phosphorylates the repetitive C-terminus of RNA polymerase II. May function in concert with npp-16 to arrest prophase blastomeres in response to anoxia. The chain is Cyclin-dependent kinase 1 (cdk-1) from Caenorhabditis elegans.